A 434-amino-acid polypeptide reads, in one-letter code: Alpha-enolase (434 aa).

Position 2 is an N-acetylserine (serine 2). Lysine 5 bears the N6-acetyllysine mark. The residue at position 27 (serine 27) is a Phosphoserine. The tract at residues 31–38 (FRAAVPSG) is epitope recognized by CAR and healthy patient antibodies. Serine 40 provides a ligand contact to Mg(2+). Tyrosine 44 is modified (phosphotyrosine). The tract at residues 56-63 (RYMGKGVS) is epitope recognized by CAR antibodies. The residue at position 60 (lysine 60) is an N6-acetyllysine; alternate. Lysine 60 bears the N6-succinyllysine; alternate mark. Lysine 64 and lysine 71 each carry N6-acetyllysine. Lysine 89 is modified (N6-acetyllysine; alternate). Residue lysine 89 is modified to N6-succinyllysine; alternate. 2 positions are modified to N6-acetyllysine: lysine 92 and lysine 126. Residues 97-237 (MDGTENKSKF…KTAIGKAGYT (141 aa)) form a required for repression of c-myc promoter activity region. Positions 158 and 167 each coordinate substrate. Lysine 193 and lysine 199 each carry N6-acetyllysine. Lysine 202 is modified (N6-acetyllysine; alternate). Residue lysine 202 forms a Glycyl lysine isopeptide (Lys-Gly) (interchain with G-Cter in SUMO2); alternate linkage. Glutamate 210 (proton donor) is an active-site residue. Lysine 228 and lysine 233 each carry N6-acetyllysine; alternate. Lysine 228 carries the N6-succinyllysine; alternate modification. Lysine 228 is subject to N6-(2-hydroxyisobutyryl)lysine; alternate. Lysine 233 carries the post-translational modification N6-malonyllysine; alternate. A Mg(2+)-binding site is contributed by aspartate 245. Serine 254 bears the Phosphoserine mark. Lysine 256 carries the post-translational modification N6-acetyllysine. Serine 263 and serine 272 each carry phosphoserine. At lysine 281 the chain carries N6-acetyllysine; alternate. Position 281 is an N6-(2-hydroxyisobutyryl)lysine; alternate (lysine 281). Position 285 is an N6-acetyllysine (lysine 285). Phosphotyrosine is present on tyrosine 287. Residue serine 291 is modified to Phosphoserine. Mg(2+)-binding residues include glutamate 293 and aspartate 318. Substrate-binding residues include glutamate 293 and aspartate 318. Lysine 335 and lysine 343 each carry N6-acetyllysine. The Proton acceptor role is filled by lysine 343. Substrate is bound by residues 370-373 (SHRS) and lysine 394. The required for interaction with PLG stretch occupies residues 405–434 (AKYNQLLRIEEELGSKAKFAGRNFRNPLAK). An N6-acetyllysine modification is found at lysine 406. Residue lysine 420 is modified to N6-acetyllysine; alternate. Lysine 420 carries the post-translational modification N6-succinyllysine; alternate. Residue lysine 420 is modified to N6-malonyllysine; alternate.

The protein belongs to the enolase family. In terms of assembly, mammalian enolase is composed of 3 isozyme subunits, alpha, beta and gamma, which can form homodimers or heterodimers which are cell-type and development-specific. ENO1 interacts with PLG in the neuronal plasma membrane and promotes its activation. The C-terminal lysine is required for this binding. Isoform MBP-1 interacts with TRAPPC2B. Interacts with ENO4 and PGAM2. Interacts with CMTM6. It depends on Mg(2+) as a cofactor. In terms of processing, ISGylated. Lysine 2-hydroxyisobutyrylation (Khib) by p300/EP300 activates the phosphopyruvate hydratase activity. In terms of tissue distribution, the alpha/alpha homodimer is expressed in embryo and in most adult tissues. The alpha/beta heterodimer and the beta/beta homodimer are found in striated muscle, and the alpha/gamma heterodimer and the gamma/gamma homodimer in neurons.

The protein resides in the cytoplasm. It is found in the cell membrane. It localises to the myofibril. Its subcellular location is the sarcomere. The protein localises to the m line. The protein resides in the nucleus. The enzyme catalyses (2R)-2-phosphoglycerate = phosphoenolpyruvate + H2O. Its pathway is carbohydrate degradation; glycolysis; pyruvate from D-glyceraldehyde 3-phosphate: step 4/5. Glycolytic enzyme the catalyzes the conversion of 2-phosphoglycerate to phosphoenolpyruvate. In addition to glycolysis, involved in various processes such as growth control, hypoxia tolerance and allergic responses. May also function in the intravascular and pericellular fibrinolytic system due to its ability to serve as a receptor and activator of plasminogen on the cell surface of several cell-types such as leukocytes and neurons. Stimulates immunoglobulin production. Its function is as follows. Binds to the myc promoter and acts as a transcriptional repressor. May be a tumor suppressor. This chain is Alpha-enolase (ENO1), found in Homo sapiens (Human).